The chain runs to 113 residues: Pancreatic progenitor cell differentiation and proliferation factor A (113 aa).

This sequence belongs to the PPDPF family.

Its function is as follows. Probable regulator of exocrine pancreas development. This Xenopus laevis (African clawed frog) protein is Pancreatic progenitor cell differentiation and proliferation factor A (ppdpf-a).